A 156-amino-acid polypeptide reads, in one-letter code: Cell division protein SepF (156 aa).

The protein belongs to the SepF family. Homodimer. Interacts with FtsZ.

It is found in the cytoplasm. Cell division protein that is part of the divisome complex and is recruited early to the Z-ring. Probably stimulates Z-ring formation, perhaps through the cross-linking of FtsZ protofilaments. Its function overlaps with FtsA. The protein is Cell division protein SepF of Bacillus cytotoxicus (strain DSM 22905 / CIP 110041 / 391-98 / NVH 391-98).